A 298-amino-acid chain; its full sequence is tRNA dimethylallyltransferase (298 aa).

12–19 is an ATP binding site; it reads GPTASGKT. A substrate-binding site is contributed by 14–19; that stretch reads TASGKT. An interaction with substrate tRNA region spans residues 37–40; that stretch reads DSRQ.

It belongs to the IPP transferase family. As to quaternary structure, monomer. The cofactor is Mg(2+).

The enzyme catalyses adenosine(37) in tRNA + dimethylallyl diphosphate = N(6)-dimethylallyladenosine(37) in tRNA + diphosphate. Functionally, catalyzes the transfer of a dimethylallyl group onto the adenine at position 37 in tRNAs that read codons beginning with uridine, leading to the formation of N6-(dimethylallyl)adenosine (i(6)A). The protein is tRNA dimethylallyltransferase of Synechococcus sp. (strain CC9902).